Here is a 710-residue protein sequence, read N- to C-terminus: Protein-glutamine gamma-glutamyltransferase Z (710 aa).

Active-site residues include C279, H338, and D361. Ca(2+)-binding residues include N401, D403, E450, and E455.

The protein belongs to the transglutaminase superfamily. Transglutaminase family. Ca(2+) is required as a cofactor. Widely expressed.

It catalyses the reaction L-glutaminyl-[protein] + L-lysyl-[protein] = [protein]-L-lysyl-N(6)-5-L-glutamyl-[protein] + NH4(+). Catalyzes the cross-linking of proteins and the conjugation of polyamines to proteins. In Homo sapiens (Human), this protein is Protein-glutamine gamma-glutamyltransferase Z (TGM7).